Consider the following 282-residue polypeptide: MEKIFLNGEFVSPSEAKVSYNDRGYVFGDGIYEYIRVYNGKLFTVTEHYERFLRSANEIGLDLNYSVEELIELSRKLVDMNQIETGAIYIQATRGVAERNHSFPTPEVEPAIVAYTKSYDRPYDHLENGVNGVTVEDIRWLRCDIKSLNLLGNVLAKEYAVKYNAVEAIQHRGETVTEGSSSNAYAIKDGVIYTHPINNYILNGITRIVIKKIAEDYNIPFKEETFTVDFLRNADEVIVSSTSAEVTPVIKLDGEPVNDGKVGPITRQLQEGFEKYIESHSI.

Tyr-32 is a binding site for substrate. Residue Arg-51 participates in pyridoxal 5'-phosphate binding. Positions 99 and 101 each coordinate substrate. Lys-146 (proton acceptor) is an active-site residue. Lys-146 carries the post-translational modification N6-(pyridoxal phosphate)lysine. Glu-178 is a pyridoxal 5'-phosphate binding site.

This sequence belongs to the class-IV pyridoxal-phosphate-dependent aminotransferase family. Homodimer. Pyridoxal 5'-phosphate is required as a cofactor.

It catalyses the reaction D-alanine + 2-oxoglutarate = D-glutamate + pyruvate. In terms of biological role, acts on the D-isomers of alanine, leucine, aspartate, glutamate, aminobutyrate, norvaline and asparagine. The enzyme transfers an amino group from a substrate D-amino acid to the pyridoxal phosphate cofactor to form pyridoxamine and an alpha-keto acid in the first half-reaction. The second half-reaction is the reverse of the first, transferring the amino group from the pyridoxamine to a second alpha-keto acid to form the product D-amino acid via a ping-pong mechanism. This is an important process in the formation of D-alanine and D-glutamate, which are essential bacterial cell wall components. This is D-alanine aminotransferase (dat) from Staphylococcus aureus (strain MW2).